Consider the following 250-residue polypeptide: 3-deoxy-manno-octulosonate cytidylyltransferase (250 aa).

It belongs to the KdsB family.

It is found in the cytoplasm. The enzyme catalyses 3-deoxy-alpha-D-manno-oct-2-ulosonate + CTP = CMP-3-deoxy-beta-D-manno-octulosonate + diphosphate. Its pathway is nucleotide-sugar biosynthesis; CMP-3-deoxy-D-manno-octulosonate biosynthesis; CMP-3-deoxy-D-manno-octulosonate from 3-deoxy-D-manno-octulosonate and CTP: step 1/1. It participates in bacterial outer membrane biogenesis; lipopolysaccharide biosynthesis. Its function is as follows. Activates KDO (a required 8-carbon sugar) for incorporation into bacterial lipopolysaccharide in Gram-negative bacteria. The polypeptide is 3-deoxy-manno-octulosonate cytidylyltransferase (Legionella pneumophila (strain Corby)).